A 141-amino-acid polypeptide reads, in one-letter code: Putative pre-16S rRNA nuclease (141 aa).

It belongs to the YqgF nuclease family.

It is found in the cytoplasm. Could be a nuclease involved in processing of the 5'-end of pre-16S rRNA. The sequence is that of Putative pre-16S rRNA nuclease from Clostridioides difficile (strain 630) (Peptoclostridium difficile).